Consider the following 349-residue polypeptide: Carbamoyl phosphate synthase small chain (349 aa).

The CPSase stretch occupies residues 1-170 (MKAKLILENG…KYEISGEGKK (170 aa)). Residues S45, G218, and G220 each coordinate L-glutamine. Positions 170–349 (KVAIIDFGIK…IFDEFMKYAL (180 aa)) constitute a Glutamine amidotransferase type-1 domain. The active-site Nucleophile is the C245. Residues L246, Q249, N287, G289, and Y290 each coordinate L-glutamine. Catalysis depends on residues H327 and E329.

This sequence belongs to the CarA family. In terms of assembly, composed of two chains; the small (or glutamine) chain promotes the hydrolysis of glutamine to ammonia, which is used by the large (or ammonia) chain to synthesize carbamoyl phosphate. Tetramer of heterodimers (alpha,beta)4.

The enzyme catalyses hydrogencarbonate + L-glutamine + 2 ATP + H2O = carbamoyl phosphate + L-glutamate + 2 ADP + phosphate + 2 H(+). The catalysed reaction is L-glutamine + H2O = L-glutamate + NH4(+). Its pathway is amino-acid biosynthesis; L-arginine biosynthesis; carbamoyl phosphate from bicarbonate: step 1/1. The protein operates within pyrimidine metabolism; UMP biosynthesis via de novo pathway; (S)-dihydroorotate from bicarbonate: step 1/3. Its function is as follows. Small subunit of the glutamine-dependent carbamoyl phosphate synthetase (CPSase). CPSase catalyzes the formation of carbamoyl phosphate from the ammonia moiety of glutamine, carbonate, and phosphate donated by ATP, constituting the first step of 2 biosynthetic pathways, one leading to arginine and/or urea and the other to pyrimidine nucleotides. The small subunit (glutamine amidotransferase) binds and cleaves glutamine to supply the large subunit with the substrate ammonia. In Clostridium perfringens (strain 13 / Type A), this protein is Carbamoyl phosphate synthase small chain.